We begin with the raw amino-acid sequence, 68 residues long: Molybdenum-pterin-binding protein 1 (68 aa).

Residues 2–68 (SISARNQLKG…IKSTDVMILA (67 aa)) form the Mop domain.

Its function is as follows. Binds one mole of molybdenum per mole of protein and contains a pterin. The polypeptide is Molybdenum-pterin-binding protein 1 (mopI) (Clostridium pasteurianum).